A 154-amino-acid chain; its full sequence is Style cell-cycle inhibitor 1-A (154 aa).

Basic and acidic residues-rich tracts occupy residues 1–11 (MGSDKKTPEEK) and 24–48 (DEVK…DKSK). The disordered stretch occupies residues 1–84 (MGSDKKTPEE…DKSKNKFEEL (84 aa)). Basic residues predominate over residues 63–77 (GEKHKTKSHKHKDKS).

In terms of tissue distribution, specifically expressed in flowers pistils, especially in stigmas and styles. Barely detected in roots, stems, leaves, sepals, petals and stamen.

It localises to the nucleus. Its function is as follows. Component of the auxin signaling transduction pathway that regulates cell proliferation and differentiation during flowers stigmas and styles development. Involved in the regulation of auxin-related genes. The protein is Style cell-cycle inhibitor 1-A of Nicotiana tabacum (Common tobacco).